We begin with the raw amino-acid sequence, 662 residues long: DNA ligase (662 aa).

NAD(+) contacts are provided by residues 34-38 (DYDYD), 83-84 (SI), and glutamate 113. Lysine 115 (N6-AMP-lysine intermediate) is an active-site residue. Positions 136, 172, 286, and 310 each coordinate NAD(+). Residues cysteine 404, cysteine 407, cysteine 422, and cysteine 427 each contribute to the Zn(2+) site. In terms of domain architecture, BRCT spans 583–662 (RASASCQGKT…SDLLKILYPN (80 aa)).

This sequence belongs to the NAD-dependent DNA ligase family. LigA subfamily. The cofactor is Mg(2+). Mn(2+) is required as a cofactor.

It catalyses the reaction NAD(+) + (deoxyribonucleotide)n-3'-hydroxyl + 5'-phospho-(deoxyribonucleotide)m = (deoxyribonucleotide)n+m + AMP + beta-nicotinamide D-nucleotide.. Functionally, DNA ligase that catalyzes the formation of phosphodiester linkages between 5'-phosphoryl and 3'-hydroxyl groups in double-stranded DNA using NAD as a coenzyme and as the energy source for the reaction. It is essential for DNA replication and repair of damaged DNA. In Chlamydia felis (strain Fe/C-56) (Chlamydophila felis), this protein is DNA ligase.